Reading from the N-terminus, the 477-residue chain is Glycogen synthase (477 aa).

ADP-alpha-D-glucose is bound at residue Lys15.

This sequence belongs to the glycosyltransferase 1 family. Bacterial/plant glycogen synthase subfamily.

The enzyme catalyses [(1-&gt;4)-alpha-D-glucosyl](n) + ADP-alpha-D-glucose = [(1-&gt;4)-alpha-D-glucosyl](n+1) + ADP + H(+). It participates in glycan biosynthesis; glycogen biosynthesis. Synthesizes alpha-1,4-glucan chains using ADP-glucose. The protein is Glycogen synthase of Edwardsiella ictaluri (strain 93-146).